Consider the following 367-residue polypeptide: Probable sugar phosphate/phosphate translocator At1g48230 (367 aa).

Transmembrane regions (helical) follow at residues 9 to 29 (LVLT…VILY), 43 to 63 (LPIT…FLLI), 76 to 96 (FEIY…SLWF), 106 to 126 (VAFI…MAVV), 140 to 160 (MVLV…FNVI), 163 to 183 (VYQV…QVLL), 193 to 213 (VTSL…PWYV), 229 to 249 (WIFF…FLVI), 257 to 276 (IRVA…TVIF), and 280 to 302 (TITG…YNYI). The span at 321 to 330 (ITKDWKEKNS) shows a compositional bias: basic and acidic residues. The interval 321 to 341 (ITKDWKEKNSSDGGSPRGLEL) is disordered.

The protein belongs to the TPT transporter family. TPT (TC 2.A.7.9) subfamily.

The protein localises to the membrane. This is Probable sugar phosphate/phosphate translocator At1g48230 from Arabidopsis thaliana (Mouse-ear cress).